A 383-amino-acid chain; its full sequence is Putative glutamate--cysteine ligase 2-2 (383 aa).

Belongs to the glutamate--cysteine ligase type 2 family. YbdK subfamily.

The catalysed reaction is L-cysteine + L-glutamate + ATP = gamma-L-glutamyl-L-cysteine + ADP + phosphate + H(+). ATP-dependent carboxylate-amine ligase which exhibits weak glutamate--cysteine ligase activity. This is Putative glutamate--cysteine ligase 2-2 from Legionella pneumophila (strain Lens).